Reading from the N-terminus, the 353-residue chain is Rhodopsin (353 aa).

Residues 1-36 (MNGTEGDNFYVPFSNKTGLARSPYEYPQYYLAEPWK) are Extracellular-facing. Residues N2 and N15 are each glycosylated (N-linked (GlcNAc...) asparagine). The chain crosses the membrane as a helical span at residues 37–61 (YSALAAYMFFLILVGFPVNFLTLFV). Topologically, residues 62 to 73 (TVQHKKLRTPLN) are cytoplasmic. The helical transmembrane segment at 74–96 (YILLNLAMANLFMVLFGFTVTMY) threads the bilayer. Residues 97 to 110 (TSMNGYFVFGPTMC) lie on the Extracellular side of the membrane. Residues C110 and C187 are joined by a disulfide bond. Residues 111-133 (SIEGFFATLGGEVALWSLVVLAI) traverse the membrane as a helical segment. The 'Ionic lock' involved in activated form stabilization motif lies at 134–136 (ERY). At 134 to 152 (ERYIVICKPMGNFRFGNTH) the chain is on the cytoplasmic side. Residues 153-173 (AIMGVAFTWIMALACAAPPLV) form a helical membrane-spanning segment. Residues 174 to 202 (GWSRYIPEGMQCSCGPDYYTLNPNFNNES) are Extracellular-facing. Residues 203–224 (YVVYMFVVHFLVPFVIIFFCYG) traverse the membrane as a helical segment. Over 225–252 (RLLCTVKEAAAAQQESASTQKAEKEVTR) the chain is Cytoplasmic. Residues 253 to 274 (MVVLMVIGFLVCWVPYASVAFY) traverse the membrane as a helical segment. The Extracellular portion of the chain corresponds to 275–286 (IFTHQGSDFGAT). Residues 287 to 308 (FMTLPAFFAKSSALYNPVIYIL) traverse the membrane as a helical segment. The residue at position 296 (K296) is an N6-(retinylidene)lysine. The Cytoplasmic segment spans residues 309-353 (MNKQFRNCMITTLCCGKNPLGDDESGASTSKTEVSSVSTSPVSPA). The disordered stretch occupies residues 330-353 (DDESGASTSKTEVSSVSTSPVSPA). A compositionally biased stretch (low complexity) spans 336 to 353 (STSKTEVSSVSTSPVSPA).

This sequence belongs to the G-protein coupled receptor 1 family. Opsin subfamily. Post-translationally, phosphorylated on some or all of the serine and threonine residues present in the C-terminal region. Contains one covalently linked retinal chromophore. In terms of tissue distribution, short photoreceptor cells.

The protein resides in the membrane. It localises to the cell projection. It is found in the cilium. The protein localises to the photoreceptor outer segment. In terms of biological role, photoreceptor required for image-forming vision at low light intensity. While most salt water fish species use retinal as chromophore, most freshwater fish use 3-dehydroretinal, or a mixture of retinal and 3-dehydroretinal. Light-induced isomerization of 11-cis to all-trans retinal triggers a conformational change that activates signaling via G-proteins. Subsequent receptor phosphorylation mediates displacement of the bound G-protein alpha subunit by arrestin and terminates signaling. The protein is Rhodopsin (RHO) of Lethenteron camtschaticum (Japanese lamprey).